The sequence spans 575 residues: Transcription factor COE2 (575 aa).

The interval Arg62–Asn65 is interaction with DNA. The C5-type zinc finger occupies Cys150 to Cys169. 2 interaction with DNA regions span residues Asn196–Asn203 and Asn235–Lys238. The region spanning Pro253 to Thr336 is the IPT/TIG domain. The span at Ser441–Thr453 shows a compositional bias: polar residues. Positions Ser441–Met479 are disordered. Residues Ser454 to Met479 show a composition bias toward low complexity.

It belongs to the COE family. As to quaternary structure, forms either a homodimer or a heterodimer with a related family member. Interacts with SIX1.

The protein localises to the nucleus. Its function is as follows. Transcription factor that, in osteoblasts, activates the decoy receptor for RANKL, TNFRSF11B, which in turn regulates osteoclast differentiation. Acts in synergy with the Wnt-responsive LEF1/CTNNB1 pathway. Recognizes variations of the palindromic sequence 5'-ATTCCCNNGGGAATT-3'. This is Transcription factor COE2 (EBF2) from Homo sapiens (Human).